Reading from the N-terminus, the 291-residue chain is Porphobilinogen deaminase (291 aa).

Position 237 is an S-(dipyrrolylmethanemethyl)cysteine (Cys-237).

It belongs to the HMBS family. In terms of assembly, monomer. Dipyrromethane serves as cofactor.

It catalyses the reaction 4 porphobilinogen + H2O = hydroxymethylbilane + 4 NH4(+). It functions in the pathway porphyrin-containing compound metabolism; protoporphyrin-IX biosynthesis; coproporphyrinogen-III from 5-aminolevulinate: step 2/4. Functionally, tetrapolymerization of the monopyrrole PBG into the hydroxymethylbilane pre-uroporphyrinogen in several discrete steps. In Clostridium perfringens (strain ATCC 13124 / DSM 756 / JCM 1290 / NCIMB 6125 / NCTC 8237 / Type A), this protein is Porphobilinogen deaminase.